A 159-amino-acid polypeptide reads, in one-letter code: Cystatin-9 (159 aa).

Positions 1–28 (MSSPQRRKAMPWALSLLLMGFQLLVTYA) are cleaved as a signal peptide.

Belongs to the cystatin family. In terms of tissue distribution, expressed in heart, placenta, lung, liver, skeletal muscle and pancreas. Not expressed in brain. Expressed in epididymis, kidney, testis, spinal cord, and thymus with a strong expression in epididymis and kidney and a weak expression in the spinal cord and thymus.

It is found in the secreted. Functionally, may be involved in testis development. May play a role in hematopoietic differentiation or inflammation. Has immunomodulatory and antimicrobial functions against Francisella tularensis, a Gram-negative bacteria. This is Cystatin-9 (CST9) from Homo sapiens (Human).